Consider the following 512-residue polypeptide: Cytochrome P450 monooxygenase hkm5 (512 aa).

The helical transmembrane segment at 18 to 38 threads the bilayer; the sequence is LIQLVRALLWVLVITIGGAIV. Residues asparagine 184, asparagine 263, asparagine 275, asparagine 374, and asparagine 419 are each glycosylated (N-linked (GlcNAc...) asparagine). Cysteine 456 contacts heme.

This sequence belongs to the cytochrome P450 family. Heme is required as a cofactor.

The protein localises to the membrane. The enzyme catalyses hancockiamide A + reduced [NADPH--hemoprotein reductase] + O2 = hancockiamide G + oxidized [NADPH--hemoprotein reductase] + 2 H2O + H(+). The catalysed reaction is hancockiamide B + reduced [NADPH--hemoprotein reductase] + O2 = hancockiamide C + oxidized [NADPH--hemoprotein reductase] + 2 H2O + H(+). It catalyses the reaction hancockiamide D + reduced [NADPH--hemoprotein reductase] + O2 = hancockiamide H + oxidized [NADPH--hemoprotein reductase] + 2 H2O + H(+). Its pathway is secondary metabolite biosynthesis. Its function is as follows. Cytochrome P450 monooxygenase; part of the gene cluster that mediates the biosynthesis of hancockiamides, an unusual new family of N-cinnamoylated piperazines. The NRPS hkm10 and the NmrA-like reductase hkm9 are proposed to convert two molecules of L-Phe to the intermediary piperazine called xenocockiamide A. Xenocockiamide A is then converted to hancockiamide D via a series of hydroxylations and O-methylations. The tyrosinase hkm6 may catalyze an aromatic hydroxylation, then the 2-oxoglutarate-dependent Fe(II) dioxygenase hkm4 and the FAD-dependent phenol hydroxylase hkm7 may catalyze consecutive hydroxylations to install 2 more hydroxy groups, and the methyltransferase hkm8 probably catalyzes two methylations using 2 molecules of S-adenosyl-L-methionine (SAM). The NRPS hkm11 activates and transfers trans-cinnamate supplied by the PAL hkm12 to hancockiamide D and produces hancockiamide A. NRPS Hkm11 has the flexibility to tolerate the bulky hancockiamide G as a substrate and the absence of the acetyl-transferase hkm3 opens up the opportunity for hkm11 to introduce a second N-cinnamoyl moiety. The cytochrome P450 monooxygenase hkm5 catalyzes the methylenedioxy bridge formation, converting hancockiamide A into hancockiamide G. Hkm5 can also convert hancockiamide B into hancockiamide C, and hancockiamide D into hancockiamide H. The N-acetyltransferase hkm3 finally transfers an acetyl group to 1-N of piperazine, converting hancockiamide A into hancockiamide B and hancockiamide G into hancockiamide C. The protein is Cytochrome P450 monooxygenase hkm5 of Aspergillus hancockii.